We begin with the raw amino-acid sequence, 223 residues long: Putative protein phosphatase 2C 63 (223 aa).

Residues 1 to 22 form a disordered region; sequence MASSQQAVRETGRGRASSSSAG. The 212-residue stretch at 1–212 folds into the PPM-type phosphatase domain; that stretch reads MASSQQAVRE…RNFHVHSSHV (212 aa).

The protein belongs to the PP2C family.

The enzyme catalyses O-phospho-L-seryl-[protein] + H2O = L-seryl-[protein] + phosphate. It carries out the reaction O-phospho-L-threonyl-[protein] + H2O = L-threonyl-[protein] + phosphate. The protein is Putative protein phosphatase 2C 63 of Oryza sativa subsp. japonica (Rice).